A 1004-amino-acid chain; its full sequence is Presequence protease, mitochondrial (1004 aa).

The transit peptide at 1–34 (MLRNAAAGARKAVTELSQFPKPGEKLHGFTLVRS) directs the protein to the mitochondrion. H84 provides a ligand contact to Zn(2+). Residue E87 is the Proton acceptor of the active site. A Zn(2+)-binding site is contributed by H88. The active site involves E160. E188 serves as a coordination point for Zn(2+).

Belongs to the peptidase M16 family. PreP subfamily. In terms of assembly, monomer and homodimer; homodimerization is induced by binding of the substrate. Requires Zn(2+) as cofactor.

The protein localises to the mitochondrion intermembrane space. It localises to the mitochondrion matrix. Functionally, degrades mitochondrial transit peptides after their cleavage in the intermembrane space or in the matrix, and presequence peptides; clearance of these peptides is required to keep the presequence processing machinery running. Preferentially cleaves the N-terminal side of paired basic amino acid residues. Also degrades other unstructured peptides. May function as an ATP-dependent peptidase as opposed to a metalloendopeptidase. The chain is Presequence protease, mitochondrial (CYM1) from Gibberella zeae (strain ATCC MYA-4620 / CBS 123657 / FGSC 9075 / NRRL 31084 / PH-1) (Wheat head blight fungus).